The primary structure comprises 733 residues: Cyclic nucleotide-gated channel (733 aa).

Disordered regions lie at residues 1-33 (MSTA…PTAS) and 67-95 (PNGN…IEVP). The Cytoplasmic segment spans residues 1–125 (MSTAEPAPDP…PSTDNFYYWT (125 aa)). Residues 12–25 (NPSTSGLAPTTNGI) show a composition bias toward polar residues. The chain crosses the membrane as a helical span at residues 126 to 148 (CVVTVAYIYNLLFVIARQVFNDL). Residues 149–197 (IGPSSQSLCRFYNGTLNSTTQVECTYNMLTNMKEMPTYSQYPDLGWSKY) are Extracellular-facing. Residues 198–217 (WHFRMLWVFFDLLMDCVYLI) traverse the membrane as a helical segment. The Cytoplasmic portion of the chain corresponds to 218 to 251 (DTFLNYRMGYMDQGLVVREAEKVTKAYWQSKQYR). Residues 252 to 265 (IDGISLIPLDYILG) form a helical membrane-spanning segment. At 266-276 (WPIPYINWRGL) the chain is on the extracellular side. A helical membrane pass occupies residues 277-287 (PILRLNRLIRY). Residues 288-308 (KRVRNCLERTETRSSMPNAFR) lie on the Cytoplasmic side of the membrane. The chain crosses the membrane as a helical span at residues 309–331 (VVVVVWYIVIIIHWNACLYFWIS). Residues 332-362 (EWIGLGTDAWVYGHLNKQSLPDDITDTLLRR) lie on the Extracellular side of the membrane. 2 helical membrane passes run 363–385 (YVYS…SPVR) and 386–411 (NIEY…GNVG). The selectivity filter stretch occupies residues 376-379 (TIGE). E379 lines the Na(+) pocket. Residues 412–733 (SMISNMSAAR…TGTESESLLK (322 aa)) lie on the Cytoplasmic side of the membrane. Positions 419–496 (AARTEFQNKM…TLRKVRIFQD (78 aa)) are C-linker. Residues 493–607 (IFQDCEAGLL…ALREYPDARK (115 aa)) are cyclic nucleotide-binding domain. G559 is a 3',5'-cyclic GMP binding site. E560 serves as a coordination point for 3',5'-cyclic AMP. 3',5'-cyclic GMP is bound by residues S562, R575, T576, K619, and D620. R575 provides a ligand contact to 3',5'-cyclic AMP. A disordered region spans residues 694–733 (SIDGGDISTDGVDERVRPPRLRQTKTIDLPTGTESESLLK).

This sequence belongs to the cyclic nucleotide-gated cation channel (TC 1.A.1.5) family. Homotetramer. As to expression, expressed at the sensory endings of thermosensory, gustatory, and olfactory neurons.

Its subcellular location is the cell membrane. The protein localises to the cell projection. It localises to the cilium. The enzyme catalyses Ca(2+)(in) = Ca(2+)(out). It carries out the reaction Na(+)(in) = Na(+)(out). It catalyses the reaction K(+)(in) = K(+)(out). Pore-forming subunit of the cyclic nucleotide-gated channel. Required for normal thermosensation and chemosensation sensory behavior. Required, downstream of receptor-type guanylate cyclase gcy-9, for CO2-mediated responses in BAG neurons. Required, downstream of receptor-type guanylate cyclase gcy-14, for alkaline pH-mediated responses in ASE-left (ASEL) neurons. Involved in the development of ASJ sensory neuron axon during late larval stages and in the maintenance of normal axon morphology in the adult. Regulates dauer formation. Required for the calcium flux to the cytoplasm in the ASJ sensory neurons upon the onset and removal of a nitric oxide (NO) stimulus, thereby promoting the ASJ-mediated behavioral avoidance response to NO-producing organisms like P.aeruginosa. In ASI and ASJ sensory neurons, controls behavioral response to P.aeruginosa by up-regulating the transcription of daf-7, a member of the TGF-beta family. In AWB and AWC sensory neurons, mediates the recognition of food odors which subsequently allows for the detection of preferred food sources. In AWC neurons, acts to promote expression of srsx-3, a member of the GPCR family. Binding to cGMP results in conformational changes at the hydrophobic gate that converts the protein from an inactive closed state to an active open state. The polypeptide is Cyclic nucleotide-gated channel (tax-4) (Caenorhabditis elegans).